Reading from the N-terminus, the 731-residue chain is MSNVVTRRGGSSIRVRLTVLCAKNLAKRDFFRLPDPFAKIVVDGSGQCHSTDTVKNTLDPKWNQHYDLYVGKMDSITISIWNHKKIHKKQGAGFLGCVRLLSNAISRLKDTGYQRLDLCKLNPTDNDAVRGQIVVSLQTRDRIGTLGSVVDCRGLLDNEGALLEDTGPGRPLSCFMDEPAPYTDGPGAAGGGPGRLVESPGQEQRLQAQRVRGPEVREHVQTPQNRSHGFQSQDLPEGYEQRTTVQGQVYFLHTQTGVSTWHDPRIPRDLNSVNCDDLGSLPAGWEVRTTVSGRIYFVDHNNRTTQFTDPRLHHIINHQSQLKEPNHAIPVQSDGSLEDGDEFPAQRYERDLVQKLKVLRHELSLLQPQAGHCRVEVSREEIFEESYRQIMKMRPKDLKKRLMVKFRGEEGLDYGGVAREWLYLLCHEMLNPYYGLFQYSTDNIYTLQINPDSSINPDHLSYFHFVGRIMGLAVFHGHYINGGFTVPFYKQLLGKPIQLSDLESVDPELHKSLVWILENDITSVLDHTFCVEHNAFGRLLQHELKPNGKNLQVTEENKKEYVRLYVNWRFMRGIEAQFLALQKGFNELIPQHLLKPFEQKELELIIGGLDKIDISDWKANTRLKHCLANSNIVQWFWQAVESFDEERRARLLQFVTGSTRVPLQGFKALQGSTGAAGPRLFTIHLIDANTDNLPKAHTCFNRIDIPPYESYEKLYEKLLTAVEETSGFAVE.

One can recognise a C2 domain in the interval 1 to 120 (MSNVVTRRGG…TGYQRLDLCK (120 aa)). The segment at 210 to 235 (RVRGPEVREHVQTPQNRSHGFQSQDL) is disordered. Polar residues predominate over residues 221-234 (QTPQNRSHGFQSQD). 2 WW domains span residues 233-266 (QDLP…DPRI) and 279-312 (GSLP…DPRL). An HECT domain is found at 394 to 731 (RPKDLKKRLM…VEETSGFAVE (338 aa)). Cys-699 acts as the Glycyl thioester intermediate in catalysis.

The protein localises to the cytoplasm. Its subcellular location is the cell membrane. The catalysed reaction is S-ubiquitinyl-[E2 ubiquitin-conjugating enzyme]-L-cysteine + [acceptor protein]-L-lysine = [E2 ubiquitin-conjugating enzyme]-L-cysteine + N(6)-ubiquitinyl-[acceptor protein]-L-lysine.. It participates in protein modification; protein ubiquitination. In terms of biological role, E3 ubiquitin-protein ligase that acts as a negative regulator of BMP signaling pathway. Mediates ubiquitination and degradation of smad1 and smad5, 2 receptor-regulated SMADs specific for the BMP pathway. Promotes ubiquitination and subsequent proteasomal degradation of TRAF family members and rhoa. May play a role in dendrite formation by melanocytes. In Xenopus laevis (African clawed frog), this protein is E3 ubiquitin-protein ligase SMURF1 (smurf1).